The sequence spans 714 residues: Probable metal-nicotianamine transporter YSL5 (714 aa).

The disordered stretch occupies residues H17–D44. A compositionally biased stretch (basic and acidic residues) spans E27 to F36. Helical transmembrane passes span A67–L87, G90–W110, C135–M155, L175–P195, V236–G256, I295–I315, V340–S360, I413–L433, I445–L465, L477–L497, F531–L551, L593–L613, and F631–W651.

Belongs to the YSL (TC 2.A.67.2) family.

It is found in the membrane. Its function is as follows. May be involved in the transport of nicotianamine-chelated metals. The polypeptide is Probable metal-nicotianamine transporter YSL5 (YSL5) (Arabidopsis thaliana (Mouse-ear cress)).